We begin with the raw amino-acid sequence, 220 residues long: Cell division protein DedD (220 aa).

The helical transmembrane segment at 9 to 29 (LVGTIVLVALGVIVLPGLLDG) threads the bilayer. Disordered stretches follow at residues 46–84 (KAGDRDEPDMMPAATQALPTQPPEGAAEEVRAGDAAAPS) and 97–137 (FEPE…EEKA). The segment covering 57-70 (PAATQALPTQPPEG) has biased composition (low complexity). Positions 100 to 109 (EPAPVAPPKP) are enriched in pro residues. Composition is skewed to basic and acidic residues over residues 110–119 (KPVEPPKPKV) and 127–137 (PEPKPVVEEKA). The region spanning 138 to 217 (APTGKAYVVQ…SGLSGVVMGY (80 aa)) is the SPOR domain.

It belongs to the DedD family.

Its subcellular location is the cell inner membrane. Non-essential cell division protein that could be required for efficient cell constriction. The protein is Cell division protein DedD of Escherichia coli (strain K12).